The primary structure comprises 1304 residues: TPR-containing protein DDB_G0280363 (1304 aa).

Disordered regions lie at residues 19 to 85 (QQHH…HPQQ), 153 to 195 (NINN…NSSL), 296 to 334 (LPST…YTQQ), 447 to 477 (GFNW…QRQQ), 576 to 687 (QNQQ…VTTI), and 706 to 728 (LTTV…VESP). Low complexity-rich tracts occupy residues 25–44 (QQNN…QFNQ), 52–85 (HQQH…HPQQ), and 153–194 (NINN…NNSS). Positions 296–306 (LPSTNSSIVSR) are enriched in polar residues. A compositionally biased stretch (low complexity) spans 307-316 (QQQLQQQQQK). Residues 448–465 (FNWSPSLQPDQSTSTNHT) show a composition bias toward polar residues. Low complexity-rich tracts occupy residues 466–477 (QAMLQQQQQRQQ) and 576–597 (QNQQ…PNQH). Over residues 598-625 (HGQHQHNQHNQHHNQHHNQSHPNHKNQH) the composition is skewed to basic residues. The span at 626-687 (QKQNQTQQST…NNNTNNVTTI (62 aa)) shows a compositional bias: low complexity. TPR repeat units lie at residues 769–802 (WRVY…QPYI), 899–932 (MKHV…VEKG), 978–1011 (WKIY…CPEN), 1046–1079 (SKLR…AHVE), 1084–1111 (WKVF…KESL), 1112–1150 (KIHS…VPKS), and 1152–1184 (EVWC…TPQF).

The chain is TPR-containing protein DDB_G0280363 from Dictyostelium discoideum (Social amoeba).